A 43-amino-acid chain; its full sequence is Protein PsbN (43 aa).

Residues 7–29 (LSIALAAVCIGVTGYSIYLSFGP) form a helical membrane-spanning segment.

It belongs to the PsbN family.

It is found in the cellular thylakoid membrane. Functionally, may play a role in photosystem I and II biogenesis. This chain is Protein PsbN, found in Thermosynechococcus vestitus (strain NIES-2133 / IAM M-273 / BP-1).